Here is a 235-residue protein sequence, read N- to C-terminus: Vacuolar protein sorting-associated protein 60.2 (235 aa).

The disordered stretch occupies residues 1–30 (MKRIFGAKNNKEPPPSIQDASDRINKRGDS). Residues 20–30 (ASDRINKRGDS) show a composition bias toward basic and acidic residues. Positions 99–148 (LKDAQQTMTALKSANKELKGMMKTVKIQDIDNLQDDMMDLMDESSEIQET) form a coiled coil. The disordered stretch occupies residues 174–235 (DMGNETEADG…PAVPRASLRG (62 aa)).

It belongs to the SNF7 family.

Its subcellular location is the endosome. It is found in the multivesicular body membrane. Functionally, probable peripherally associated component of the endosomal sorting required for transport complex III (ESCRT-III) which is involved in multivesicular bodies (MVBs) formation and sorting of endosomal cargo proteins into MVBs. The sequence is that of Vacuolar protein sorting-associated protein 60.2 from Arabidopsis thaliana (Mouse-ear cress).